The sequence spans 97 residues: MAAKKTVTKADLVDQVAQATGLKKKDVKAMVDALLAKVEEALANGSKVQLTGFGTFEVRKRKARTGVKPGTKEKIKIPATQYPAFKPGKALKDKVKK.

It belongs to the bacterial histone-like protein family. Has been isolated in complexes with 5S rRNA and bL25, and with 5S rRNA, bL25 and uL5. Homodimer.

Functionally, histone-like DNA-binding protein which is capable of wrapping DNA to stabilize it, and thus to prevent its denaturation under extreme environmental conditions. This is DNA-binding protein HU from Thermus thermophilus (strain ATCC 27634 / DSM 579 / HB8).